The chain runs to 521 residues: Citrinin biosynthesis cluster MFS transporter ctnC (521 aa).

The interval 1-29 (MKEEIDAPVSTDASGTDLENARDQPSGEK) is disordered. 8 helical membrane-spanning segments follow: residues 58–78 (SLIT…SSVF), 95–115 (VMTL…LVWG), 124–144 (LKPL…VAVA), 155–175 (FFLG…LADF), 182–202 (AIAI…GPIM), 237–257 (WTAW…FLTL), 313–333 (ILVC…LFFV), and 349–369 (GIAA…CLLV). N383 carries N-linked (GlcNAc...) asparagine glycosylation. Transmembrane regions (helical) follow at residues 392 to 412 (LPPM…FGWT), 417 to 437 (ISWA…LMIW), 465 to 485 (AVSA…GVDW), and 489 to 509 (LLGF…FYGA).

This sequence belongs to the major facilitator superfamily. CAR1 family.

Its subcellular location is the membrane. Functionally, MFS transporter; part of the gene cluster that mediates the biosynthesis the mycotoxin citrinin, a hepato-nephrotoxic compound to humans due to inhibition of respiration complex III. The polypeptide is Citrinin biosynthesis cluster MFS transporter ctnC (ctnC) (Monascus purpureus (Red mold)).